An 82-amino-acid chain; its full sequence is RNA-binding protein Hfq (82 aa).

The 61-residue stretch at 11–71 folds into the Sm domain; sequence DTFLNSVRKS…ISTIMPAQPV (61 aa).

This sequence belongs to the Hfq family. Homohexamer.

Functionally, RNA chaperone that binds small regulatory RNA (sRNAs) and mRNAs to facilitate mRNA translational regulation in response to envelope stress, environmental stress and changes in metabolite concentrations. Also binds with high specificity to tRNAs. This is RNA-binding protein Hfq from Caulobacter vibrioides (strain ATCC 19089 / CIP 103742 / CB 15) (Caulobacter crescentus).